A 556-amino-acid polypeptide reads, in one-letter code: MNPSTAQAEVLVDELVRNGVRQVVLAPGSRNAPLSFALHDAAEAGRLDLHVRIDERSAGFLALGIATRTRRPVVVVCTSGTAATNLHPAVSEACHAGIPLIVLTADRPPELRAAGANQTIDQYRLYGTEVRLFDELAVAENRPGQNAYWRTQVCRAASMAAGTTWGGPVHLNLPFREPLVPSGDRDWCEPLDGRADGQRWTEVSGNESAPSTLSKVRSRRGLVLVADGGADSASAWGERYGWPVLSETGGVGLSGAAAISTGMWLLKLPGFMRDHRPEQVLCVGRNTVFRQVQSLLADSEVEVLLAHGGSHWPTPAHNVREVAETFGASPGPADPDWLTGWQQADQKASAALHAALDLERWPNGPVVARDVVDALPAGSLLVLGSSNPTRDVALAANHRPDVVVHRNRGVAGIDGTVSAAIGSALAHGGPSYALLGDLTFLHDSNGLMLGPQEQRPDLTIVVLNDDGGGIFSLLEQGSPEHRGSFERVFGTPHGTDIGSLCAAHGVEHTVVRQRSEFGVALRRRPGLRVVEVRADRAELRGVHERLHAAVRGALHG.

The protein belongs to the TPP enzyme family. MenD subfamily. Homodimer. It depends on Mg(2+) as a cofactor. Mn(2+) is required as a cofactor. Thiamine diphosphate serves as cofactor.

It catalyses the reaction isochorismate + 2-oxoglutarate + H(+) = 5-enolpyruvoyl-6-hydroxy-2-succinyl-cyclohex-3-ene-1-carboxylate + CO2. The protein operates within quinol/quinone metabolism; 1,4-dihydroxy-2-naphthoate biosynthesis; 1,4-dihydroxy-2-naphthoate from chorismate: step 2/7. It participates in quinol/quinone metabolism; menaquinone biosynthesis. Catalyzes the thiamine diphosphate-dependent decarboxylation of 2-oxoglutarate and the subsequent addition of the resulting succinic semialdehyde-thiamine pyrophosphate anion to isochorismate to yield 2-succinyl-5-enolpyruvyl-6-hydroxy-3-cyclohexene-1-carboxylate (SEPHCHC). This is 2-succinyl-5-enolpyruvyl-6-hydroxy-3-cyclohexene-1-carboxylate synthase from Saccharopolyspora erythraea (strain ATCC 11635 / DSM 40517 / JCM 4748 / NBRC 13426 / NCIMB 8594 / NRRL 2338).